We begin with the raw amino-acid sequence, 445 residues long: MSQRKFFGTDGIRGKVGADQMTPELALKLGWAAGRVLARTGTKKVIIGKDTRISGYMFESALEAGFSSAGLNVLLMGPMPTPAVAYLTRTFRAEAGVVISASHNPYYDNGIKFFSNDGSKLDDEIELAIEAELEKPLICAESQFLGKVSRIDDARGRYIEYCKGNFPADQTLSGLKIVVDCAHGATYHIAPAVFRELGAEVVAIGVEPNGMNINDKCGATSMGAIRDKVLEVNADLGIALDGDGDRIMMVTQEGDIIDGDQILYILALDAKERGLLKGGVVGTQMANLGLELALKDEGIPFARSKVGDRYVMELLKELGWRIGGENSGHILNLDHGTTGDGIVAGILVLAAMRRSGKGLQQLIAKLKMFPQVLVNVRFEGDKNPLEADTVTAKVAEVERELGERGRVLLRKSGTEPLLRVMVEGEDKETVTRLANAIADAVKAAT.

Ser-102 serves as the catalytic Phosphoserine intermediate. The Mg(2+) site is built by Ser-102, Asp-241, Asp-243, and Asp-245. Phosphoserine is present on Ser-102.

The protein belongs to the phosphohexose mutase family. Mg(2+) serves as cofactor. Activated by phosphorylation.

It catalyses the reaction alpha-D-glucosamine 1-phosphate = D-glucosamine 6-phosphate. Functionally, catalyzes the conversion of glucosamine-6-phosphate to glucosamine-1-phosphate. The sequence is that of Phosphoglucosamine mutase 1 from Shewanella amazonensis (strain ATCC BAA-1098 / SB2B).